A 192-amino-acid chain; its full sequence is MAP6 domain-containing protein 1 (192 aa).

Residues cysteine 5, cysteine 10, and cysteine 11 are each lipidated (S-palmitoyl cysteine). The disordered stretch occupies residues 36–106 (LESEEPIPGG…RTKPSATPGR (71 aa)). Residue serine 38 is modified to Phosphoserine. Residues 43 to 58 (PGGVPSRRGPSPAGSR) are compositionally biased toward low complexity. Mn stretches follow at residues 123-136 (TTSY…WTGV) and 158-170 (DGSP…APEV). At serine 160 the chain carries Phosphoserine.

The protein belongs to the STOP family. Interacts with calmodulin. In terms of processing, palmitoylated. Palmitoylation enhances association with microtubules.

The protein resides in the golgi apparatus. Its subcellular location is the cytoplasm. The protein localises to the cytoskeleton. In terms of biological role, may have microtubule-stabilizing activity. The protein is MAP6 domain-containing protein 1 (MAP6D1) of Bos taurus (Bovine).